Reading from the N-terminus, the 383-residue chain is Succinyl-diaminopimelate desuccinylase (383 aa).

His79 contributes to the Zn(2+) binding site. Asp81 is an active-site residue. A Zn(2+)-binding site is contributed by Asp110. Glu141 acts as the Proton acceptor in catalysis. Zn(2+) is bound by residues Glu142, Glu170, and His355.

The protein belongs to the peptidase M20A family. DapE subfamily. As to quaternary structure, homodimer. Zn(2+) is required as a cofactor. Requires Co(2+) as cofactor.

The catalysed reaction is N-succinyl-(2S,6S)-2,6-diaminopimelate + H2O = (2S,6S)-2,6-diaminopimelate + succinate. Its pathway is amino-acid biosynthesis; L-lysine biosynthesis via DAP pathway; LL-2,6-diaminopimelate from (S)-tetrahydrodipicolinate (succinylase route): step 3/3. In terms of biological role, catalyzes the hydrolysis of N-succinyl-L,L-diaminopimelic acid (SDAP), forming succinate and LL-2,6-diaminopimelate (DAP), an intermediate involved in the bacterial biosynthesis of lysine and meso-diaminopimelic acid, an essential component of bacterial cell walls. The sequence is that of Succinyl-diaminopimelate desuccinylase from Helicobacter pylori (strain HPAG1).